The primary structure comprises 399 residues: C-type lectin domain family 4 member M (399 aa).

Residues 1-49 (MSDSKEQRVQPLGLLEEDPTTSGIRLFPRDFQFQQTHGHKSSTGCLGHG) are Cytoplasmic-facing. The Endocytosis signal signature appears at 14-15 (LL). A helical; Signal-anchor for type II membrane protein membrane pass occupies residues 50-70 (PLVLQLLSFTLLAGVLVAILV). Residues 71–399 (QVYKVPSSLS…KKPTACFRDE (329 aa)) lie on the Extracellular side of the membrane. N-linked (GlcNAc...) asparagine glycosylation is present at Asn-92. 7 repeat units span residues 108 to 130 (KLQE…PEKS), 131 to 153 (TLQE…PEKS), 154 to 176 (RLQE…PEKS), 177 to 199 (KQQE…PEKS), 200 to 222 (KQQE…PEKS), 223 to 245 (KQQE…PDQS), and 246 to 268 (KQQQ…CCRC). The tract at residues 108–269 (KLQEIYQELI…AFERLCCRCP (162 aa)) is 7 X approximate tandem repeats. Intrachain disulfides connect Cys-265-Cys-395, Cys-268-Cys-279, Cys-296-Cys-389, and Cys-368-Cys-381. In terms of domain architecture, C-type lectin spans 274–390 (FFQGNCYFIS…CNVDNYWICK (117 aa)). Ca(2+)-binding residues include Glu-359, Asn-361, Ser-363, Glu-366, Asn-377, and Asp-378. Asn-361 carries N-linked (GlcNAc...) asparagine glycosylation.

Homotetramer.

Its subcellular location is the membrane. Probable pathogen-recognition receptor involved in peripheral immune surveillance in liver. May mediate the endocytosis of pathogens which are subsequently degraded in lysosomal compartments. Probably recognizes in a calcium-dependent manner high mannose N-linked oligosaccharides in a variety of pathogen antigens. Is a receptor for ICAM3, probably by binding to mannose-like carbohydrates. The sequence is that of C-type lectin domain family 4 member M (CLEC4M) from Hylobates lar (Lar gibbon).